The primary structure comprises 857 residues: DNA mismatch repair protein MutS (857 aa).

608 to 615 (GPNMSGKS) provides a ligand contact to ATP.

The protein belongs to the DNA mismatch repair MutS family.

This protein is involved in the repair of mismatches in DNA. It is possible that it carries out the mismatch recognition step. This protein has a weak ATPase activity. This chain is DNA mismatch repair protein MutS, found in Lactobacillus johnsonii (strain CNCM I-12250 / La1 / NCC 533).